A 328-amino-acid polypeptide reads, in one-letter code: tRNA uridine(34) hydroxylase (328 aa).

Residues S123–S217 form the Rhodanese domain. C177 acts as the Cysteine persulfide intermediate in catalysis.

This sequence belongs to the TrhO family.

It catalyses the reaction uridine(34) in tRNA + AH2 + O2 = 5-hydroxyuridine(34) in tRNA + A + H2O. Its function is as follows. Catalyzes oxygen-dependent 5-hydroxyuridine (ho5U) modification at position 34 in tRNAs. The protein is tRNA uridine(34) hydroxylase of Psychromonas ingrahamii (strain DSM 17664 / CCUG 51855 / 37).